The chain runs to 158 residues: SsrA-binding protein (158 aa).

A disordered region spans residues 132-158 (KKTHDKRETEKKRDWNREKARLMRDKG). Positions 136 to 158 (DKRETEKKRDWNREKARLMRDKG) are enriched in basic and acidic residues.

The protein belongs to the SmpB family.

The protein localises to the cytoplasm. Functionally, required for rescue of stalled ribosomes mediated by trans-translation. Binds to transfer-messenger RNA (tmRNA), required for stable association of tmRNA with ribosomes. tmRNA and SmpB together mimic tRNA shape, replacing the anticodon stem-loop with SmpB. tmRNA is encoded by the ssrA gene; the 2 termini fold to resemble tRNA(Ala) and it encodes a 'tag peptide', a short internal open reading frame. During trans-translation Ala-aminoacylated tmRNA acts like a tRNA, entering the A-site of stalled ribosomes, displacing the stalled mRNA. The ribosome then switches to translate the ORF on the tmRNA; the nascent peptide is terminated with the 'tag peptide' encoded by the tmRNA and targeted for degradation. The ribosome is freed to recommence translation, which seems to be the essential function of trans-translation. This is SsrA-binding protein from Brucella anthropi (strain ATCC 49188 / DSM 6882 / CCUG 24695 / JCM 21032 / LMG 3331 / NBRC 15819 / NCTC 12168 / Alc 37) (Ochrobactrum anthropi).